A 209-amino-acid chain; its full sequence is Uracil phosphoribosyltransferase (209 aa).

Residues R79, R104, and 131–139 (DPMLATGGS) contribute to the 5-phospho-alpha-D-ribose 1-diphosphate site. Uracil is bound by residues I194 and 199-201 (GDA). Residue D200 coordinates 5-phospho-alpha-D-ribose 1-diphosphate.

This sequence belongs to the UPRTase family. The cofactor is Mg(2+).

The catalysed reaction is UMP + diphosphate = 5-phospho-alpha-D-ribose 1-diphosphate + uracil. It functions in the pathway pyrimidine metabolism; UMP biosynthesis via salvage pathway; UMP from uracil: step 1/1. With respect to regulation, allosterically activated by GTP. Functionally, catalyzes the conversion of uracil and 5-phospho-alpha-D-ribose 1-diphosphate (PRPP) to UMP and diphosphate. In Symbiobacterium thermophilum (strain DSM 24528 / JCM 14929 / IAM 14863 / T), this protein is Uracil phosphoribosyltransferase.